Reading from the N-terminus, the 98-residue chain is DNA-binding protein Fis (98 aa).

Positions 74–93 (QTRAATMMGINRGTLRKKLK) form a DNA-binding region, H-T-H motif.

The protein belongs to the transcriptional regulatory Fis family. Homodimer.

Activates ribosomal RNA transcription. Plays a direct role in upstream activation of rRNA promoters. The chain is DNA-binding protein Fis from Photobacterium profundum (strain SS9).